The chain runs to 635 residues: Extracellular metalloproteinase 9 (635 aa).

The signal sequence occupies residues Met-1–Ala-19. Positions His-20–Asp-246 are excised as a propeptide. Asn-274 carries an N-linked (GlcNAc...) asparagine glycan. Positions Thr-279 to Gly-307 are disordered. Asn-413 carries an N-linked (GlcNAc...) asparagine glycan. His-430 lines the Zn(2+) pocket. Residue Glu-431 is part of the active site. His-434 lines the Zn(2+) pocket. N-linked (GlcNAc...) asparagine glycosylation occurs at Asn-475.

This sequence belongs to the peptidase M36 family. It depends on Zn(2+) as a cofactor.

It is found in the secreted. In terms of biological role, secreted metalloproteinase that allows assimilation of proteinaceous substrates. The polypeptide is Extracellular metalloproteinase 9 (MEP9) (Uncinocarpus reesii (strain UAMH 1704)).